Reading from the N-terminus, the 134-residue chain is Large ribosomal subunit protein bL17 (134 aa).

It belongs to the bacterial ribosomal protein bL17 family. In terms of assembly, part of the 50S ribosomal subunit. Contacts protein L32.

This Colwellia psychrerythraea (strain 34H / ATCC BAA-681) (Vibrio psychroerythus) protein is Large ribosomal subunit protein bL17.